The chain runs to 449 residues: GTP-binding protein A (449 aa).

Positions 1-77 (MFNINPYKSK…LSSKTENSLS (77 aa)) are disordered. Low complexity-rich tracts occupy residues 8 to 46 (KSKT…SSSS) and 67 to 77 (SLSSKTENSLS). The AIG1-type G domain maps to 149–386 (QNECNVLLLG…FMGHLRAKNK (238 aa)). Residues 158-165 (GRTGVGKS) are G1. 158 to 165 (GRTGVGKS) serves as a coordination point for GTP. Residues 183–187 (SCTQD) are G2. A G3 region spans residues 204-207 (DTPG). The G4 stretch occupies residues 275–278 (TYAN). The G5 stretch occupies residues 336–338 (ENS).

Belongs to the TRAFAC class TrmE-Era-EngA-EngB-Septin-like GTPase superfamily. AIG1/Toc34/Toc159-like paraseptin GTPase family. IAN subfamily.

The chain is GTP-binding protein A (gtpA) from Dictyostelium discoideum (Social amoeba).